The sequence spans 154 residues: Crossover junction endodeoxyribonuclease RuvC (154 aa).

Residues Asp7, Glu66, and Asp139 contribute to the active site. Residues Asp7, Glu66, and Asp139 each contribute to the Mg(2+) site.

This sequence belongs to the RuvC family. Homodimer which binds Holliday junction (HJ) DNA. The HJ becomes 2-fold symmetrical on binding to RuvC with unstacked arms; it has a different conformation from HJ DNA in complex with RuvA. In the full resolvosome a probable DNA-RuvA(4)-RuvB(12)-RuvC(2) complex forms which resolves the HJ. Requires Mg(2+) as cofactor.

The protein localises to the cytoplasm. It carries out the reaction Endonucleolytic cleavage at a junction such as a reciprocal single-stranded crossover between two homologous DNA duplexes (Holliday junction).. In terms of biological role, the RuvA-RuvB-RuvC complex processes Holliday junction (HJ) DNA during genetic recombination and DNA repair. Endonuclease that resolves HJ intermediates. Cleaves cruciform DNA by making single-stranded nicks across the HJ at symmetrical positions within the homologous arms, yielding a 5'-phosphate and a 3'-hydroxyl group; requires a central core of homology in the junction. The consensus cleavage sequence is 5'-(A/T)TT(C/G)-3'. Cleavage occurs on the 3'-side of the TT dinucleotide at the point of strand exchange. HJ branch migration catalyzed by RuvA-RuvB allows RuvC to scan DNA until it finds its consensus sequence, where it cleaves and resolves the cruciform DNA. This is Crossover junction endodeoxyribonuclease RuvC from Aliarcobacter butzleri (strain RM4018) (Arcobacter butzleri).